Here is a 254-residue protein sequence, read N- to C-terminus: Small ribosomal subunit protein mS40 (254 aa).

Residues Met-1 to Arg-33 constitute a mitochondrion transit peptide. Residue Ser-47 is modified to Phosphoserine. The disordered stretch occupies residues Tyr-218–Ala-254. Positions Gly-227 to Pro-240 are enriched in pro residues.

It belongs to the bacterial ribosomal protein bS18 family. Mitochondrion-specific ribosomal protein mS40 subfamily. In terms of assembly, component of the mitochondrial ribosome small subunit (28S) which comprises a 12S rRNA and about 30 distinct proteins.

It is found in the mitochondrion. In Mus musculus (Mouse), this protein is Small ribosomal subunit protein mS40 (Mrps18b).